We begin with the raw amino-acid sequence, 505 residues long: Buccalin (505 aa).

An N-terminal signal peptide occupies residues 1 to 25 (MAHHRGHRHILLYVSLALSLGLALA). Residues 26 to 62 (EDATDPSDDTGSFDDVEAVSEEADLDPYSMSQELNKR) constitute a propeptide that is removed on maturation. Residue V74 is modified to Valine amide. Leucine amide occurs at positions 88 and 102. Q106 carries the post-translational modification Pyrrolidone carboxylic acid. I116 carries the post-translational modification Isoleucine amide. Residues L129, L143, L157, L171, L185, L199, L213, L227, L241, L254, L267, L281, L294, L307, L321, and L335 each carry the leucine amide modification. The residue at position 349 (E349) is a Glutamic acid 1-amide. 6 positions are modified to leucine amide: L363, L377, L391, L405, L419, and L433. Isoleucine amide occurs at positions 447 and 461. At Q465 the chain carries Pyrrolidone carboxylic acid. The segment at 472–505 (SGRLGKRSSSEQEEEDVRQVEKRSTTEEQSSKSL) is disordered. L475 carries the leucine amide modification. Residues 488-505 (VRQVEKRSTTEEQSSKSL) show a composition bias toward basic and acidic residues. Residues 495–505 (STTEEQSSKSL) constitute a propeptide that is removed on maturation.

As to expression, cholinergic motor neuron B15 innervating buccal muscles in Aplysia.

It is found in the secreted. Its function is as follows. Modulatory neuropeptide, acting presynaptically on nerve terminals to inhibit acetylcholine release. The polypeptide is Buccalin (Aplysia californica (California sea hare)).